The following is a 494-amino-acid chain: uncharacterized protein (494 aa).

2 VOC domains span residues 18 to 174 (FIDC…FINR) and 229 to 408 (SLDH…FGIL). Fe cation is bound by residues H232, H349, and E460.

Belongs to the 4HPPD family. Fe cation is required as a cofactor.

Its function is as follows. May have dioxygenase activity. This is an uncharacterized protein from Dictyostelium discoideum (Social amoeba).